The following is a 350-amino-acid chain: Probable poly-beta-1,6-N-acetyl-D-glucosamine export protein (350 aa).

The next 10 helical transmembrane spans lie at 7 to 29, 44 to 66, 79 to 101, 116 to 138, 145 to 167, 187 to 204, 211 to 233, 243 to 262, 269 to 291, and 306 to 328; these read ELVY…TQIT, FYIR…LLTT, TRVK…SESL, LLGQ…SYII, LFNS…YYFT, IIFG…MGYN, FLER…FIAL, SFSY…ILGI, MLFN…HPII, and TMVF…GMIL.

Belongs to the acyltransferase 3 family.

Its subcellular location is the cell membrane. Presumably involved in the export of the biofilm adhesin polysaccharide poly-beta-1,6-N-acetyl-D-glucosamine (PNAG, also referred to as PIA) across the cell membrane. This Staphylococcus aureus (strain MRSA252) protein is Probable poly-beta-1,6-N-acetyl-D-glucosamine export protein (icaC).